The primary structure comprises 127 residues: Fumarate reductase subunit C (127 aa).

The next 3 helical transmembrane spans lie at 30 to 50 (ATVL…GSLV), 67 to 87 (LVIA…QTFF), and 107 to 127 (IIVL…LIVV).

The protein belongs to the FrdC family. As to quaternary structure, part of an enzyme complex containing four subunits: a flavoprotein (FrdA), an iron-sulfur protein (FrdB), and two hydrophobic anchor proteins (FrdC and FrdD).

It is found in the cell inner membrane. In terms of biological role, anchors the catalytic components of the fumarate reductase complex to the cell membrane, binds quinones. The sequence is that of Fumarate reductase subunit C from Vibrio cholerae serotype O1 (strain ATCC 39541 / Classical Ogawa 395 / O395).